Consider the following 177-residue polypeptide: Coatomer subunit zeta-1 (177 aa).

Met1 carries the post-translational modification N-acetylmethionine.

It belongs to the adaptor complexes small subunit family. Oligomeric complex that consists of at least the alpha, beta, beta', gamma, delta, epsilon and zeta subunits.

It is found in the cytoplasm. It localises to the golgi apparatus membrane. The protein resides in the cytoplasmic vesicle. The protein localises to the COPI-coated vesicle membrane. The coatomer is a cytosolic protein complex that binds to dilysine motifs and reversibly associates with Golgi non-clathrin-coated vesicles, which further mediate biosynthetic protein transport from the ER, via the Golgi up to the trans Golgi network. Coatomer complex is required for budding from Golgi membranes, and is essential for the retrograde Golgi-to-ER transport of dilysine-tagged proteins. The zeta subunit may be involved in regulating the coat assembly and, hence, the rate of biosynthetic protein transport due to its association-dissociation properties with the coatomer complex. The protein is Coatomer subunit zeta-1 (COPZ1) of Bos taurus (Bovine).